Consider the following 191-residue polypeptide: Guanylate kinase (191 aa).

A Guanylate kinase-like domain is found at 10–188 (GQLIVLTGPS…ALHRLVKLIG (179 aa)). 17–24 (GPSGVGKG) contacts ATP.

The protein belongs to the guanylate kinase family.

The protein resides in the cytoplasm. It carries out the reaction GMP + ATP = GDP + ADP. Functionally, essential for recycling GMP and indirectly, cGMP. This is Guanylate kinase (gmk) from Synechocystis sp. (strain ATCC 27184 / PCC 6803 / Kazusa).